Reading from the N-terminus, the 100-residue chain is Small ribosomal subunit protein uS17 (100 aa).

It belongs to the universal ribosomal protein uS17 family. Part of the 30S ribosomal subunit.

Its function is as follows. One of the primary rRNA binding proteins, it binds specifically to the 5'-end of 16S ribosomal RNA. The polypeptide is Small ribosomal subunit protein uS17 (Erythrobacter litoralis (strain HTCC2594)).